The chain runs to 225 residues: Ribonuclease 3 (225 aa).

The RNase III domain occupies 2-128 (LSTLIKKLKI…LFGAIYLDLG (127 aa)). Glu43 lines the Mg(2+) pocket. The active site involves Asp47. Mg(2+) contacts are provided by Asn114 and Glu117. Residue Glu117 is part of the active site. The DRBM domain occupies 152–220 (DFKTQLQELV…ARYVLNILSK (69 aa)).

It belongs to the ribonuclease III family. In terms of assembly, homodimer. The cofactor is Mg(2+).

Its subcellular location is the cytoplasm. It carries out the reaction Endonucleolytic cleavage to 5'-phosphomonoester.. Its function is as follows. Digests double-stranded RNA. Involved in the processing of primary rRNA transcript to yield the immediate precursors to the large and small rRNAs (23S and 16S). Processes some mRNAs, and tRNAs when they are encoded in the rRNA operon. Processes pre-crRNA and tracrRNA of type II CRISPR loci if present in the organism. This Phytoplasma mali (strain AT) protein is Ribonuclease 3.